Here is a 230-residue protein sequence, read N- to C-terminus: Ribonuclease 3 (230 aa).

Residues 5–125 (YSRFYNILGY…VIGAIYLDSD (121 aa)) form the RNase III domain. Residue Glu40 participates in Mg(2+) binding. The active site involves Asp44. Residues Asp111 and Glu114 each coordinate Mg(2+). Residue Glu114 is part of the active site. A DRBM domain is found at 153 to 223 (DSKSKLQEIL…AEKMIEMLSQ (71 aa)).

It belongs to the ribonuclease III family. Homodimer. The cofactor is Mg(2+).

It is found in the cytoplasm. The enzyme catalyses Endonucleolytic cleavage to 5'-phosphomonoester.. Functionally, digests double-stranded RNA. Involved in the processing of primary rRNA transcript to yield the immediate precursors to the large and small rRNAs (23S and 16S). Processes some mRNAs, and tRNAs when they are encoded in the rRNA operon. Processes pre-crRNA and tracrRNA of type II CRISPR loci if present in the organism. The protein is Ribonuclease 3 of Francisella tularensis subsp. tularensis (strain WY96-3418).